A 292-amino-acid chain; its full sequence is Bifunctional protein FolD (292 aa).

Residues 169-171, T196, and V237 contribute to the NADP(+) site; that span reads GRG.

It belongs to the tetrahydrofolate dehydrogenase/cyclohydrolase family. As to quaternary structure, homodimer.

The catalysed reaction is (6R)-5,10-methylene-5,6,7,8-tetrahydrofolate + NADP(+) = (6R)-5,10-methenyltetrahydrofolate + NADPH. It carries out the reaction (6R)-5,10-methenyltetrahydrofolate + H2O = (6R)-10-formyltetrahydrofolate + H(+). It functions in the pathway one-carbon metabolism; tetrahydrofolate interconversion. Catalyzes the oxidation of 5,10-methylenetetrahydrofolate to 5,10-methenyltetrahydrofolate and then the hydrolysis of 5,10-methenyltetrahydrofolate to 10-formyltetrahydrofolate. In Bifidobacterium longum (strain NCC 2705), this protein is Bifunctional protein FolD.